The chain runs to 239 residues: Octanoyltransferase (239 aa).

The BPL/LPL catalytic domain occupies 48 to 236 (EGGDELVWLV…AFETVFGETT (189 aa)). Substrate is bound by residues 87-94 (RGGEYTYH), 167-169 (ALG), and 180-182 (GLS). Cys198 (acyl-thioester intermediate) is an active-site residue.

Belongs to the LipB family.

It localises to the cytoplasm. The enzyme catalyses octanoyl-[ACP] + L-lysyl-[protein] = N(6)-octanoyl-L-lysyl-[protein] + holo-[ACP] + H(+). The protein operates within protein modification; protein lipoylation via endogenous pathway; protein N(6)-(lipoyl)lysine from octanoyl-[acyl-carrier-protein]: step 1/2. Its function is as follows. Catalyzes the transfer of endogenously produced octanoic acid from octanoyl-acyl-carrier-protein onto the lipoyl domains of lipoate-dependent enzymes. Lipoyl-ACP can also act as a substrate although octanoyl-ACP is likely to be the physiological substrate. The chain is Octanoyltransferase from Rhizobium etli (strain ATCC 51251 / DSM 11541 / JCM 21823 / NBRC 15573 / CFN 42).